Consider the following 467-residue polypeptide: Probable protein phosphatase 2C 6 (467 aa).

The disordered stretch occupies residues 61–81 (VEDDAVAPGRGEEGGEASAVG). Residues 149–457 (LWGHKSICGR…DNISVIVVDL (309 aa)) form the PPM-type phosphatase domain. 4 residues coordinate Mn(2+): aspartate 205, glycine 206, aspartate 386, and aspartate 448.

It belongs to the PP2C family. Interacts with PYL9. It depends on Mg(2+) as a cofactor. Mn(2+) is required as a cofactor.

The protein localises to the nucleus. The protein resides in the cytoplasm. It is found in the cytosol. The catalysed reaction is O-phospho-L-seryl-[protein] + H2O = L-seryl-[protein] + phosphate. The enzyme catalyses O-phospho-L-threonyl-[protein] + H2O = L-threonyl-[protein] + phosphate. In terms of biological role, probable protein phosphatase that may function in abscisic acid (ABA) signaling. This chain is Probable protein phosphatase 2C 6, found in Oryza sativa subsp. japonica (Rice).